Here is a 498-residue protein sequence, read N- to C-terminus: Lysine--tRNA ligase (498 aa).

Residues E407 and E414 each contribute to the Mg(2+) site.

It belongs to the class-II aminoacyl-tRNA synthetase family. In terms of assembly, homodimer. Mg(2+) is required as a cofactor.

The protein resides in the cytoplasm. The catalysed reaction is tRNA(Lys) + L-lysine + ATP = L-lysyl-tRNA(Lys) + AMP + diphosphate. This chain is Lysine--tRNA ligase, found in Rhizobium johnstonii (strain DSM 114642 / LMG 32736 / 3841) (Rhizobium leguminosarum bv. viciae).